A 494-amino-acid chain; its full sequence is Neuronal acetylcholine receptor subunit alpha-6 (494 aa).

Residues 1 to 25 (MLTSKGQGFLHGGLCLWLCVFTPFF) form the signal peptide. The Extracellular segment spans residues 26–239 (KGCVGCATEE…ITYSFYIRRL (214 aa)). N-linked (GlcNAc...) asparagine glycosylation is found at asparagine 54 and asparagine 171. Cystine bridges form between cysteine 158-cysteine 172 and cysteine 222-cysteine 223. Helical transmembrane passes span 240–264 (PMFY…VFYL), 272–290 (VTLC…LVIT), and 306–327 (YLLF…VLNI). The Cytoplasmic portion of the chain corresponds to 328-465 (HYRTPTTHTM…WKYVAMVVDR (138 aa)). A Phosphoserine modification is found at serine 401. A helical transmembrane segment spans residues 466 to 484 (VFLWVFIIVCVFGTAGLFL).

It belongs to the ligand-gated ion channel (TC 1.A.9) family. Acetylcholine receptor (TC 1.A.9.1) subfamily. Alpha-6/CHRNA6 sub-subfamily. Neuronal AChR is composed of two different types of subunits: alpha and non-alpha (beta). CHRNA6/alpha-6 subunit can be combined to CHRNB2/beta-2, CHRNA4/alpha-4 and CHRNB3/beta-3 to give rise to functional receptors. Heteropentamers containing CHRNB3 have an stoichiometry of (CHRNA6:CHRNB2)2:CHRNB3. Interacts with LYPD6.

The protein resides in the synaptic cell membrane. The catalysed reaction is Ca(2+)(in) = Ca(2+)(out). The enzyme catalyses K(+)(in) = K(+)(out). It catalyses the reaction Na(+)(in) = Na(+)(out). Activated by a myriad of ligands such as acetylcholine, cytisine and nicotine. CHRNA6 nAChR activity is inhibited by the antagonists alpha-conotoxin MII and PIA, a small disulfide-constrained peptides from cone snails. Functionally, component of neuronal acetylcholine receptors (nAChRs) that function as pentameric, ligand-gated cation channels with high calcium permeability among other activities. nAChRs are excitatory neurotrasnmitter receptors formed by a collection of nAChR subunits known to mediate synaptic transmission in the nervous system and the neuromuscular junction. Each nAchR subunit confers differential attributes to channel properties, including activation, deactivation and desensitization kinetics, pH sensitivity, cation permeability, and binding to allosteric modulators. CHRNA6 forms pentameric channels with CHRNB2, CHRNB3 and CHRNA4 that exhibit high sensitivity to ACh and nicotine and are predominantly expressed in only a few brain areas, including dopaminergic neurons, norepirephrine neurons and cells of the visual system. nAChrs containing CHRNA6 subunits mediate endogenous cholinergic modulation of dopamine and gamma-aminobutyric acid (GABA) release in response to nicotine at nerve terminals. The protein is Neuronal acetylcholine receptor subunit alpha-6 (CHRNA6) of Pan troglodytes (Chimpanzee).